The primary structure comprises 342 residues: Protein pelota homolog (342 aa).

It belongs to the eukaryotic release factor 1 family. Pelota subfamily. As to quaternary structure, monomer. It depends on a divalent metal cation as a cofactor.

It localises to the cytoplasm. In terms of biological role, may function in recognizing stalled ribosomes, interact with stem-loop structures in stalled mRNA molecules, and effect endonucleolytic cleavage of the mRNA. May play a role in the release non-functional ribosomes and degradation of damaged mRNAs. Has endoribonuclease activity. The protein is Protein pelota homolog of Methanocorpusculum labreanum (strain ATCC 43576 / DSM 4855 / Z).